A 142-amino-acid chain; its full sequence is Large ribosomal subunit protein uL11 (142 aa).

This sequence belongs to the universal ribosomal protein uL11 family. Part of the ribosomal stalk of the 50S ribosomal subunit. Interacts with L10 and the large rRNA to form the base of the stalk. L10 forms an elongated spine to which L12 dimers bind in a sequential fashion forming a multimeric L10(L12)X complex. Post-translationally, one or more lysine residues are methylated.

In terms of biological role, forms part of the ribosomal stalk which helps the ribosome interact with GTP-bound translation factors. The sequence is that of Large ribosomal subunit protein uL11 from Parvibaculum lavamentivorans (strain DS-1 / DSM 13023 / NCIMB 13966).